A 128-amino-acid polypeptide reads, in one-letter code: Small ribosomal subunit protein uS11 (128 aa).

It belongs to the universal ribosomal protein uS11 family. As to quaternary structure, part of the 30S ribosomal subunit. Interacts with proteins S7 and S18. Binds to IF-3.

Located on the platform of the 30S subunit, it bridges several disparate RNA helices of the 16S rRNA. Forms part of the Shine-Dalgarno cleft in the 70S ribosome. This Desulfosudis oleivorans (strain DSM 6200 / JCM 39069 / Hxd3) (Desulfococcus oleovorans) protein is Small ribosomal subunit protein uS11.